The following is a 578-amino-acid chain: Triokinase/FMN cyclase (578 aa).

The region spanning 9–336 (SVEGCADDAL…IDAETTAKAW (328 aa)) is the DhaK domain. Residues 56–59 (GSGH), K109, and D114 contribute to the dihydroxyacetone site. Catalysis depends on H221, which acts as the Tele-hemiaminal-histidine intermediate. The DhaL domain maps to 372–571 (KQMALVLDRI…AAAIFRAILE (200 aa)). Residues 401–404 (DGDC), 446–447 (SS), G486, and 494–495 (TM) each bind ATP. S511 and S545 each carry phosphoserine. 556–558 (DPG) contributes to the ATP binding site.

It belongs to the dihydroxyacetone kinase (DAK) family. In terms of assembly, homodimer. Interacts with IFIH1 (via the CARD domains), the interaction is inhibited by viral infection. Mg(2+) serves as cofactor. It depends on Mn(2+) as a cofactor. Co(2+) is required as a cofactor.

The enzyme catalyses dihydroxyacetone + ATP = dihydroxyacetone phosphate + ADP + H(+). It catalyses the reaction D-glyceraldehyde + ATP = D-glyceraldehyde 3-phosphate + ADP + H(+). It carries out the reaction FAD = riboflavin cyclic-4',5'-phosphate + AMP + H(+). With respect to regulation, each activity is inhibited by the substrate(s) of the other. In terms of biological role, catalyzes both the phosphorylation of dihydroxyacetone and of glyceraldehyde, and the splitting of ribonucleoside diphosphate-X compounds among which FAD is the best substrate. Represses IFIH1-mediated cellular antiviral response. The polypeptide is Triokinase/FMN cyclase (Mus musculus (Mouse)).